The primary structure comprises 197 residues: HTH-type transcriptional regulator BetI (197 aa).

Positions 8–68 (PIRRQQLIQA…ATMRHLMNAL (61 aa)) constitute an HTH tetR-type domain. A DNA-binding region (H-T-H motif) is located at residues 31 to 50 (SIALIARLAGVSNGIISHYF).

Its pathway is amine and polyamine biosynthesis; betaine biosynthesis via choline pathway [regulation]. Repressor involved in the biosynthesis of the osmoprotectant glycine betaine. It represses transcription of the choline transporter BetT and the genes of BetAB involved in the synthesis of glycine betaine. In Pseudomonas syringae pv. tomato (strain ATCC BAA-871 / DC3000), this protein is HTH-type transcriptional regulator BetI.